The primary structure comprises 303 residues: RELT-like protein 2 (303 aa).

Residues 15 to 35 (LYMLFLLVLVFFLMGLVGFMI) traverse the membrane as a helical segment. 2 disordered regions span residues 46–67 (CRTS…DDDM) and 111–303 (SSLQ…AGGV). Position 52 is a phosphoserine (Ser52). Composition is skewed to basic and acidic residues over residues 148 to 158 (RSKEGKSRPRP) and 172 to 188 (THIE…DGSP). A compositionally biased stretch (gly residues) spans 194–212 (GSGGGQDPGGGQGPGGGQP).

This sequence belongs to the RELT family. Interacts with RELT, RELL1, OXSR1, PLSCR1 and TRAF2.

It is found in the cell membrane. Functionally, induces activation of MAPK14/p38 cascade, when overexpressed. Induces apoptosis, when overexpressed. This Bos taurus (Bovine) protein is RELT-like protein 2 (RELL2).